A 206-amino-acid chain; its full sequence is MTIGNTKQTSAAAPKPTYFDHNFKLEATKVLPGEYVATNRDMLLVTVLGSCVSCCLRDSAANVSGLNHFMLPDALMDSEAAATMPARYGMHAMEILINEMIKLGADRQRMEAKIFGGGNVLKGILKSNIGERNVDFVRQYLAKEGIPVMAEDVLDSYPRKLYFFSRSGRVLVKKIKEVHNRTIFERELSYRERLRRMPLDGSIELF.

Belongs to the CheD family.

It carries out the reaction L-glutaminyl-[protein] + H2O = L-glutamyl-[protein] + NH4(+). In terms of biological role, probably deamidates glutamine residues to glutamate on methyl-accepting chemotaxis receptors (MCPs), playing an important role in chemotaxis. This is Probable chemoreceptor glutamine deamidase CheD from Laribacter hongkongensis (strain HLHK9).